We begin with the raw amino-acid sequence, 233 residues long: Orotidine 5'-phosphate decarboxylase (233 aa).

Residues Asp11, Lys34, 61 to 70, Thr117, Arg179, Gln188, Gly208, and Arg209 contribute to the substrate site; that span reads DLKLHDIPNT. The active-site Proton donor is the Lys63.

Belongs to the OMP decarboxylase family. Type 1 subfamily. In terms of assembly, homodimer.

It carries out the reaction orotidine 5'-phosphate + H(+) = UMP + CO2. Its pathway is pyrimidine metabolism; UMP biosynthesis via de novo pathway; UMP from orotate: step 2/2. Functionally, catalyzes the decarboxylation of orotidine 5'-monophosphate (OMP) to uridine 5'-monophosphate (UMP). The chain is Orotidine 5'-phosphate decarboxylase from Streptococcus pneumoniae (strain JJA).